Here is a 233-residue protein sequence, read N- to C-terminus: Hydroxyacylglutathione hydrolase (233 aa).

Zn(2+) is bound by residues His52, His54, Asp56, His57, His108, Asp125, and His163.

This sequence belongs to the metallo-beta-lactamase superfamily. Glyoxalase II family. Monomer. Zn(2+) serves as cofactor.

The enzyme catalyses an S-(2-hydroxyacyl)glutathione + H2O = a 2-hydroxy carboxylate + glutathione + H(+). It participates in secondary metabolite metabolism; methylglyoxal degradation; (R)-lactate from methylglyoxal: step 2/2. Thiolesterase that catalyzes the hydrolysis of S-D-lactoyl-glutathione to form glutathione and D-lactic acid. The protein is Hydroxyacylglutathione hydrolase of Pasteurella multocida (strain Pm70).